A 421-amino-acid polypeptide reads, in one-letter code: Protein MucB (421 aa).

In terms of domain architecture, UmuC spans 2-187 (FALIDVNGMY…LPVAEVWGVG (186 aa)).

Belongs to the DNA polymerase type-Y family.

Involved in UV protection and mutation. This is Protein MucB (mucB) from Salmonella typhimurium.